A 7059-amino-acid chain; its full sequence is MSKINKYGLELHWAPEFPWMFEDAEEKLDNPSSSEVDIVCSTTAQKLETGGICPENHVMVDCRRLLKQECCVQSSLIREIVMNTRPYDLEVLLQDALQSREAVLVTPPLGMSLEACYVRGCNPNGWTMGLFRRRSVCNTGRCAVNKHVAYQLYMIDPAGVCFGAGQFVGWVIPLAFMPVQSRKFIAPWVMYLRKCGEKGAYIKDYKRGGFEHVYNFKVEDAYDLVHDEPKGKFSKKAYALIRGYRGVKPLLYVDQYGCDYTGGLADGLEAYADKTLQEMKALFPIWSQELPFDVTVAWHVVRDPRYVMRLQSASTIRSVAYVANPTEDLCDGSVVIKEPVHVYADDSIILRQHNLVDIMSCFYMEADAVVNAFYGVDLKDCGFVMQFGYIDCEQDLCDFKGWVPGNMIDGFACTTCGHVYETGDLLAQSSGVLPVNPVLHTKSAAGYGGFGCKDSFTLYGQTVVYFGGCVYWSPARNIWIPILKSSVKSYDGLVYTGVVGCKAIVKETNLICKALYLDYVQHKCGNLHQRELLGVSDVWHKQLLLNRGVYKPLLENIDYFNMRRAKFSLETFTVCADGFMPFLLDDLVPRAYYLAVSGQAFCDYAGKICHAVVSKSKELLDVSVDSLGAAIHYLNSKIVDLAQHFSDFGTSFVSKIVHFFKTFTTSTALAFAWVLFHVLHGAYIVVESDIYFGKNIPRYASAVAQAFRSGAKVGLDSLRVTFIDGLSCFKIGRRRICLSGSKIYEVERGLLHSSQLPLDVYDLTMPSQVQKTKQKGIYLKGSGSDFSLADSVVEVVTTSLTPCGYSEPPKVADKICIVDNVYMAKAGDKYYPVVVDGHVGLLDQAWRVPCAGRCVTFKEQPTVNEIASTPKTIKVFYELDKDFNTILNTACGEFEVDDTVDMEEFYAVVIDAIEEKLSPCKELEGVGAKVSAFLQKLEDNSLFLFDEAGEEVLAPKLYCAFTAPEDDDFLEESGVEEDDVEGEETDLTVTSAGEPCVASEQEESSEILEDTLDDGPCVETSDSQVEEDVQMSDFGDLESVIQDYENVCFEFYTTEPEFVKVLDLYVPKATRNNCWLRSVLAVMQKLPCQFKDKNLQDLWVLYKQQYSQLFVDTLVNKIPANIVVPQGGYVADFAYWFLTLCDWQCVAYWKCIKCDLALKLKGLDAMFFYGDVVSHVCKCGESMVLIDVDVPFTAHFALKDKLFCAFITKRSVYKAACVVDVNDSHSMAVVDGKQIDDHRITSITSDKFDFIIGHGTSFSMTTFEIAQLYGSCITPNVCFVKGDIIKVSKRVKAEVVVNPANGHMAHGGGVAKAIAVAAGQQFVKETTDMVKSKGVCATGDCYVSTGGKLCKTVLNVVGPDARTQGKQSYALLERVYKHLNKYDCVVTTLISAGIFSVPSDVSLTYLLGTAKKQVVLVSNNQEDFDLISKCQITAVEGTKKLAERLSFNVGRSIVYETDANKLILSNDVAFVSTFNVLQDVLSLRHDIALDDDARTFVQSNVDVVPEGWRVVNKFYQINGVRPVKYFECPGGIDICSQDKVFGYVQQGSFNKATVAQIKALFLDKVDILLTVDGVNFTNRFVPVGESFGKSLGNVFCDGVNVTKHKCDINYKGKVFFQFDNLSSEDLKAVRSSFNFDQKELLAYYNMLVNCSKWQVVFNGKYFTFKQANNNCFVNVSCLMLQSLNLKFKIVQWQEAWLEFRSGRPARFVSLVLAKGGFKFGDPADSRDFLRVVFSQVDLTGAICDFEIACKCGVKQEQRTGVDAVMHFGTLSREDLEIGYTVDCSCGKKLIHCVRFDVPFLICSNTPASVKLPKGVGSANIFKGDKVGHYVHVKCEQSYQLYDASNVKKVTDVTGNLSDCLYLKNLKQTFKSVLTTYYLDDVKKIEYKPDLSQYYCDGGKYYTQRIIKAQFKTFEKVDGVYTNFKLIGHTVCDILNAKLGFDSSKEFVEYKVTEWPTATGDVVLATDDLYVKRYERGCITFGKPVIWLSHEQASLNSLTYFNRPLLVDENKFDVLKVDDVDDGGDISESDAKEPKEINIIKLSGVKKPFKVEDSVIVNDDTSEIKYVKSLSIVDVYDMWLTGCRCVVRTANALSRAVNVPTIRKFIKFGMTLVSIPIDLLNLREIKPVFNVVKAVRNKISACFNFIKWLFVLLFGWIKISADNKVIYTTEVASKLTCKLVALAFKNAFLTFKWSVVARGACIIATIFLLWFNFIYANVIFSDFYLPKIGFLPTFVGKIVQWIKNTFSLVTICDLYSIQDVGFKNQYCNGSIACQFCLAGFDMLDNYKAIDVVQYEADRRAFVDYTGVLKIVIELIVSYALYTAWFYPLFALISIQILTTWLPELLMLSTLHWSVRLLVSLANMLPAHVFMRFYIIIASFIKLFSLFRHVAYGCSKSGCLFCYKRNRSLRVKCSTIVGGMIRYYDVMANGGTGFCSKHQWNCIDCDSYKPGNTFITVEAALDLSKELKRPIQPTDVAYHTVTDVKQVGCYMRLFYDRDGQRTYDDVNASLFVDYSNLLHSKVKSVPNMHVVVVENDADKANFLNAAVFYAQSLFRPILMVDKILITTANTGTSVTETMFDVYVDTFLSMFDVDKKSLNALIATAHSSIKQGTQICKVLDTFLSCARKSCSIDSDVDTKCLADSVMSAVSAGLELTDESCNNLVPTYLKGDNIVAADLGVLIQNSAKHVQGNVAKIAGVSCIWSVDAFNQLSSDFQHKLKKACCKTGLKLELTYNKQMANVSVLTTPFSLKGGAVFSYFVYVCFVLSLVCFIGLWCLMPTYTVHKSDFQLPVYASYKVLDNGVIRDVSVEDVCFANKFEQFDQWYESTFGLSYYSNSMACPIVVAVVDQDFGSTVFNVPTKVLRYGYHVLHFITHALSADGVQCYTPHSQISYSNFYASGCVLSSACTMFAMADGSPQPYCYTDGLMQNASLYSSLVPHVRYNLANAKGFIRLPEVLREGLVRIVRTRSMSYCRVGLCEEADEGICFNFNGSWVLNNDYYRSLPGTFCGRDVFDLIYQLFKGLAQPVDFLALTASSIAGAILAVIVVLGFYYLIKLKRAFGDYTSIVFVNVIVWCVNFMMLFVFQVYPTLSCVYAICYFYATLYFPSEISVIMHLQWLVMYGTIMPLWFCLLYISVVVSNHAFWVFSYCRQLGTSVRSDGTFEEMALTTFMITKDSYCKLKNSLSDVAFNRYLSLYNKYRYYSGKMDTAAYREAACSQLAKAMDTFTNNNGSDVLYQPPTASVSTSFLQSGIVKMVNPTSKVEPCIVSVTYGNMTLNGLWLDDKVYCPRHVICSASDMTNPDYTNLLCRVTSSDFTVLFDRLSLTVMSYQMQGCMLVLTVTLQNSRTPKYTFGVVKPGETFTVLAAYNGKPQGAFHVTMRSSYTIKGSFLCGSCGSVGYVIMGDCVKFVYMHQLELSTGCHTGTDFNGDFYGPYKDAQVVQLPVQDYIQSVNFVAWLYAAILNNCNWFVQSDKCSVEDFNVWALSNGFSQVKSDLVIDALASMTGVSLETLLAAIKRLKNGFQGRQIMGSCSFEDELTPSDVYQQLAGIKLQSKRTRLVKGIVCWIMASTFLFSCIITAFVKWTMFMYVTTNMLSITFCALCVISLAMLLVKHKHLYLTMYIIPVLFTLLYNNYLVVYKQTFRGYVYAWLSYYVPSVEYTYTDEVIYGMLLLIGMVFVTLRSINHDLFSFIMFVGRVISVVSLWYMGSNLEEEILLMLASLFGTYTWTTALSMAAAKVIAKWVAVNVLYFTDIPQIKIVLVCYLFIGYIISCYWGLFSLMNSLFRMPLGVYNYKISVQELRYMNANGLRPPKNSFEALMLNFKLLGIGGVPIIEVSQFQSKLTDVKCANGGLLNCLQHLHVASNSKLWQYCSTLHNEILATSDLGVAFEKLAQLLIVLFANPAAVDSKCLTSIEEVCDDYAKDNTVLQALQSEFVNMASFVEYEVAKKNLDEACSSGSANQQQLKQLEKACNIAKSAYERDRAVARKLERMADLALTNMYKEARINDKKSKVVSALQTMLFSMVRKLDNQALNSILDNAVKGCVPLNAIPSLAANTLTIIVPDKSVYDQVVDNVYVTYAGNVWQIQTIQDSDGTNKQLHEISDDCNWPLVIIANRHNEVSATVLQNNELMPAKLKTQVVNSGPDQTCNTPTQCYYNNSYNGKIVYAILSDVDGLKYTKILKDDGNFVVLELDPPCKFTVQDVKGLKIKYLYFVKGCNTLARGWVVGTISSTVRLQAGTATEYASNSSILSLCAFSVDPKKTYLDFIQQGGTPIANCVKMLCDHAGTGMAITVKPDATTSQDSYGGASVCIYCRARVEHPDVDGLCKLRGKFVQVPVGIKDPVSYVLTHDVCQVCGFWRDGSCSCVSTDTTVQSKDTNFLNRVRGTSVDARLVPCASGLSTDVQLRAFDICNASVAGIGLHLKVNCCRFQRVDENGDKLDQFFVVKRTDLTIYNREMECYERVKDCKFVAEHDFFTFDVEGSRVPHIVRKDLTKYTMLDLCYALRHFDRNDCMLLCDILSIYAGCEQSYFTKKDWYDFVENPDIINVYKKLGPIFNRALVSATEFADKLVEVGLVGILTLDNQDLNGKWYDFGDYVIAAPGCGVAIADSYYSYMMPMLTMCHALDCELYVNNAYRLFDLVQYDFTDYKLELFNKYFKHWSMPYHPNTVDCQDDRCIIHCANFNILFSMVLPNTCFGPLVRQIFVDGVPFVVSIGYHYKELGIVMNMDVDTHRYRLSLKDLLLYAADPALHVASASALYDLRTCCFSVAAITSGVKFQTVKPGNFNQDFYDFILSKGLLKEGSSVDLKHFFFTQDGNAAITDYNYYKYNLPTMVDIKQLLFVLEVVYKYFEIYDGGCIPAAQVIVNNYDKSAGYPFNKFGKARLYYEALSFEEQDEIYAYTKRNVLPTLTQMNLKYAISAKNRARTVAGVSILSTMTGRMFHQKCLKSIAATRGVPVVIGTTKFYGGWDDMLRRLIKDVDNPVLMGWDYPKCDRAMPNILRIVSSLVLARKHEACCSQSDRFYRLANECAQVLSEIVMCGGCYYVKPGGTSSGDATTAFANSVFNICQAVSANVCALMSCNGNKIEDLSIRALQKRLYSHVYRSDMVDSTFVTEYYEFLNKHFSMMILSDDGVVCYNSDYASKGYIANISAFQQVLYYQNNVFMSESKCWVENDINNGPHEFCSQHTMLVKMDGDDVYLPYPVPSRILGAGCFVDDLLKTDSVLLIERFVSLAIDAYPLVYHENEEYQKVFRVYLEYIKKLYNELGNQILDSYSVILSTCDGQKFTDESFYKNMYLRSAVMQSVGACVVCSSQTSLRCGSCIRKPLLCCKCCYDHVMATDHKYVLSVSPYVCNAPGCDVNDVTKLYLGGMSYYCEDHKPQYSFKLVMNGMVFGLYKQSCTGSPYIDDFNRIASCKWTDVDDYILANECTERLKLFAAETQKATEEAFKQSYASATIQEIVSERELILSWEIGKVKPPLNKNYVFTGYHFTKNGKTVLGEYVFDKSELTNGVYYRATTTYKLSVGDVFVLTSHSVANLSAPTLVPQENYSSIRFASVYSVLETFQNNVVNYQHIGMKRYCTVQGPPGTGKSHLAIGLAVYYCTARVVYTAASHAAVDALCEKAYKFLNINDCTRIVPAKVRVECYDKFKINDTTRKYVFTTINALPEMVTDIVVVDEVSMLTNYELSVINARIRAKHYVYIGDPAQLPAPRVLLSKGTLEPKYFNTVTKLMCCLGPDIFLGTCYRCPKEIVDTVSALVYENKLKAKNESSSLCFKVYYKGVTTHESSSAVNMQQIYLINKFLKANPLWHKAVFISPYNSQNFAAKRVLGLQTQTVDSAQGSEYDYVIYSQTAETAHSVNVNRFNVAITRAKKGILCVMSNMQLFEALQFTTLTVDKVPQAVETRVQCSTNLFKDCSKSYSGYHPAHAPSFLAVDDKYKATGDLAVCLGIGDSAVTYSRLISLMGFKLDVTLDGYCKLFITKEEAVKRVRAWVGFDAEGAHATRDSIGTNFPLQLGFSTGIDFVVEATGLFADRDGYSFKKAVAKAPPGEQFKHLIPLMTRGQRWDVVRPRIVQMFADHLIDLSDCVVLVTWAANFELTCLRYFAKVGREISCNVSTKRATAYNSRTGYYGCWRHSVTCDYLYNPLIVDIQQWGYIGSLSSNHDLYCSVHKGAHVASSDAIMTRCLAVYDCFCNNINWNVEYPIISNELSINTSCRVLQRVMLKAAMLCNRYTLCYDIGNPKAIACVKDFDFKFYDAQPIVKSVKTLLYFFEAHKDSFKDGLCMFWNCNVDKYPPNAVVCRFDTRVLNNLNLPGCNGGSLYVNKHAFHTKPFSRAAFEHLKPMPFFYYSDTPCVYMDGMDAKQVDYVPLKSATCITRCNLGGAVCLKHAEEYREYLESYNTATTAGFTFWVYKTFDFYNLWNTFTKLQSLENVVYNLVKTGHYTGQAGEMPCAIINDKVVAKIDKEDVVIFINNTTYPTNVAVELFAKRSIRHHPELKLFRNLNIDVCWKHVIWDYARESIFCSNTYGVCMYTDLKLIDKLNVLFDGRDNGALEAFKRSNNGVYISTTKVKSLSMIRGPPRAELNGVVVDKVGDTDCVFYFAVRKEGQDVIFSQFDSLRVSSNQSPQGNLGSNEPGNVGGNDALATSTIFTQSRVISSFTCRTDMEKDFIALDQDVFIQKYGLEDYAFEHIVYGNFNQKIIGGLHLLIGLYRRQQTSNLVIQEFVSYDSSIHSYFITDEKSGGSKSVCTVIDILLDDFVALVKSLNLNCVSKVVNVNVDFKDFQFMLWCNDEKVMTFYPRLQAASDWKPGYSMPVLYKYLNSPMERVSLWNYGKPVTLPTGCMMNVAKYTQLCQYLNTTTLAVPVNTRVLHLGAGSEKGVAPGSAVLRQWLPAGTILRQWLPAGTILVHNDLYPFVSDSVATYFGDCITLPFDCQWDLIISDMYDLLLDIGVHVVRCSYIHCHMIRDKLALGGSVAIKITEFSWNAELYKLMGYFAFWTVFCTNANASSSEGFLIGINYLGKPKVEIDGNVMHAIICFGEIPQFGTGVLIACLIWLNSRLSWLVMP.

The region spanning 54–196 (PENHVMVDCR…PWVMYLRKCG (143 aa)) is the CoV Nsp1 globular domain. The BetaCoV Nsp1 C-terminal domain occupies 216 to 246 (FKVEDAYDLVHDEPKGKFSKKAYALIRGYRG). The 270-residue stretch at 250-519 (LLYVDQYGCD…LICKALYLDY (270 aa)) folds into the CoV Nsp2 N-terminal domain. Zn(2+)-binding residues include Cys392, Cys397, Cys413, and Cys416. Residues 392–416 (CEQDLCDFKGWVPGNMIDGFACTTC) form a C4 region. Positions 524–713 (CGNLHQRELL…AQAFRSGAKV (190 aa)) constitute a CoV Nsp2 middle domain. Residues 733–851 (RRRICLSGSK…LDQAWRVPCA (119 aa)) form the CoV Nsp2 C-terminal domain. Positions 853–966 (RCVTFKEQPT…LYCAFTAPED (114 aa)) constitute a Ubiquitin-like 1 domain. Positions 972-986 (ESGVEEDDVEGEETD) are enriched in acidic residues. Positions 972–1000 (ESGVEEDDVEGEETDLTVTSAGEPCVASE) are disordered. One can recognise a Peptidase C16 1 domain in the interval 1036 to 1274 (DLESVIQDYE…IAQLYGSCIT (239 aa)). Cys1074 (for PL1-PRO activity) is an active-site residue. Zn(2+) contacts are provided by Cys1151, Cys1154, Cys1177, and Cys1179. The C4-type 1 zinc-finger motif lies at 1151 to 1179 (CIKCDLALKLKGLDAMFFYGDVVSHVCKC). Active-site for PL1-PRO activity residues include His1225 and Asp1236. One can recognise a Macro domain in the interval 1275–1435 (PNVCFVKGDI…LISKCQITAV (161 aa)). The region spanning 1491–1563 (DDARTFVQSN…VAQIKALFLD (73 aa)) is the DPUP domain. The Ubiquitin-like 2 domain occupies 1562 to 1617 (LDKVDILLTVDGVNFTNRFVPVGESFGKSLGNVFCDGVNVTKHKCDINYKGKVFFQ). The Peptidase C16 2 domain occupies 1631–1892 (SSFNFDQKEL…KIEYKPDLSQ (262 aa)). Cys1671 functions as the For PL2-PRO activity in the catalytic mechanism. The Zn(2+) site is built by Cys1749, Cys1751, Cys1783, and Cys1785. The segment at 1749 to 1785 (CKCGVKQEQRTGVDAVMHFGTLSREDLEIGYTVDCSC) adopts a C4-type 2 zinc-finger fold. Catalysis depends on for PL2-PRO activity residues His1828 and Asp1842. Positions 1906–2007 (IKAQFKTFEK…TYFNRPLLVD (102 aa)) constitute a Nucleic acid-binding domain. The region spanning 2020 to 2169 (DDGGDISESD…ADNKVIYTTE (150 aa)) is the G2M domain. 3 consecutive transmembrane segments (helical) span residues 2138–2158 (ISAC…WIKI), 2199–2219 (ACII…NVIF), and 2221–2241 (DFYL…VQWI). Residues 2138–2385 (ISACFNFIKW…ASFIKLFSLF (248 aa)) form an HD1 region. The 3Ecto domain occupies 2235-2296 (GKIVQWIKNT…AIDVVQYEAD (62 aa)). Disulfide bonds link Cys2251–Cys2275 and Cys2266–Cys2272. 3 helical membrane-spanning segments follow: residues 2313–2333 (LIVS…LISI), 2343–2363 (LLML…ANML), and 2365–2385 (AHVF…FSLF). Residues 2383-2473 (SLFRHVAYGC…ELKRPIQPTD (91 aa)) are Y1. Positions 2383–2750 (SLFRHVAYGC…LTTPFSLKGG (368 aa)) constitute a CoV Nsp3 Y domain. Residues His2387, Cys2392, Cys2397, Cys2400, Cys2433, His2436, Cys2440, and Cys2443 each contribute to the Zn(2+) site. Positions 2387-2400 (HVAYGCSKSGCLFC) are ZF1. The tract at residues 2433-2443 (CSKHQWNCIDC) is ZF2. A Y2 region spans residues 2474–2566 (VAYHTVTDVK…MVDKILITTA (93 aa)). Residues 2474–2750 (VAYHTVTDVK…LTTPFSLKGG (277 aa)) are coV-Y. The Y3 stretch occupies residues 2567–2649 (NTGTSVTETM…DSVMSAVSAG (83 aa)). The tract at residues 2650 to 2750 (LELTDESCNN…LTTPFSLKGG (101 aa)) is Y4. Helical transmembrane passes span 2752–2772 (VFSY…IGLW), 2824–2844 (STFG…VAVV), 3009–3029 (VFDL…FLAL), 3031–3051 (ASSI…YYLI), 3063–3083 (IVFV…VFQV), 3090–3110 (VYAI…SVIM), and 3115–3135 (LVMY…SVVV). The interval 2752–3135 (VFSYFVYVCF…FCLLYISVVV (384 aa)) is HD2. A Nsp4C domain is found at 3149-3246 (LGTSVRSDGT…TASVSTSFLQ (98 aa)). The region spanning 3247 to 3549 (SGIVKMVNPT…YQQLAGIKLQ (303 aa)) is the Peptidase C30 domain. Residues His3287 and Cys3391 each act as for 3CL-PRO activity in the active site. Residues 3319-3775 (LSLTVMSYQM…IISCYWGLFS (457 aa)) form an HD3 region. Transmembrane regions (helical) follow at residues 3558 to 3578 (GIVC…TAFV), 3588 to 3608 (TNML…MLLV), 3615 to 3635 (LTMY…LVVY), 3657 to 3677 (TYTD…FVTL), 3684 to 3704 (LFSF…WYMG), 3711 to 3731 (ILLM…LSMA), and 3755 to 3775 (IVLV…GLFS). Positions 3837–3925 (SKLTDVKCAN…DYAKDNTVLQ (89 aa)) constitute a RdRp Nsp7 cofactor domain. The region spanning 3926–4122 (ALQSEFVNMA…HNEVSATVLQ (197 aa)) is the RdRp Nsp8 cofactor domain. Residues 4123-4232 (NNELMPAKLK…GTISSTVRLQ (110 aa)) enclose the Nsp9 ssRNA-binding domain. The ExoN/MTase coactivator domain maps to 4233 to 4370 (AGTATEYASN…CVSTDTTVQS (138 aa)). Positions 4306, 4309, 4315, 4322, 4348, 4351, 4359, and 4361 each coordinate Zn(2+). 2 zinc fingers span residues 4306-4322 (CIYC…DGLC) and 4348-4361 (CQVC…SCSC). The NiRAN domain maps to 4375 to 4630 (FLNRVRGTSV…DCELYVNNAY (256 aa)). Mn(2+) contacts are provided by Asn4578 and Asp4587. A Nsp12 Interface domain is found at 4631-4729 (RLFDLVQYDF…MNMDVDTHRY (99 aa)). Residues His4660, Cys4666, Cys4671, Cys4675, and Cys4852 each coordinate Zn(2+). Residues 4730–5297 (RLSLKDLLLY…NMYLRSAVMQ (568 aa)) enclose the Nsp12 RNA-dependent RNA polymerase domain. Residues 4732 to 4946 (SLKDLLLYAA…HQKCLKSIAA (215 aa)) are rdRp Fingers N-ter. The tract at residues 4947–4985 (TRGVPVVIGTTKFYGGWDDMLRRLIKDVDNPVLMGWDYP) is rdRp Palm N-ter. In terms of domain architecture, RdRp catalytic spans 4977-5139 (PVLMGWDYPK…CYNSDYASKG (163 aa)). The segment at 4986 to 5044 (KCDRAMPNILRIVSSLVLARKHEACCSQSDRFYRLANECAQVLSEIVMCGGCYYVKPGG) is rdRp Fingers C-ter. Residues His5007, Cys5010, and Cys5011 each coordinate Zn(2+). Residues 5045-5180 (TSSGDATTAF…NNGPHEFCSQ (136 aa)) are rdRp Palm C-ter. Active-site residues include Ser5124, Asp5125, and Asp5126. The tract at residues 5181-5297 (HTMLVKMDGD…NMYLRSAVMQ (117 aa)) is rdRp Thumb. The CV ZBD domain occupies 5298-5410 (SVGACVVCSS…DDFNRIASCK (113 aa)). Cys5302, Cys5305, Cys5313, Cys5316, Cys5323, Cys5326, His5330, His5336, Cys5347, Cys5352, Cys5369, and His5372 together coordinate Zn(2+). The 182-residue stretch at 5553–5734 (SVLETFQNNV…MCCLGPDIFL (182 aa)) folds into the (+)RNA virus helicase ATP-binding domain. An ATP-binding site is contributed by 5578–5585 (GPPGTGKS). The (+)RNA virus helicase C-terminal domain maps to 5735–5904 (GTCYRCPKEI…VETRVQCSTN (170 aa)). The region spanning 5971–6186 (LFITKEEAVK…RCLAVYDCFC (216 aa)) is the ExoN domain. Active-site residues include Asp5989, Glu5991, and Glu6090. The Zn(2+) site is built by His6156, Cys6160, and His6163. Residues His6167 and Asp6172 contribute to the active site. Cys6178 is a Zn(2+) binding site. The N7-MTase domain occupies 6195 to 6421 (YPIISNELSI…NLWNTFTKLQ (227 aa)). 6230–6236 (DIGNPKA) provides a ligand contact to S-adenosyl-L-methionine. Residues 6308-6322 (CNGGSLYVNKHAFHT) form a gpppA-binding region. Residues Cys6346, Cys6367, Cys6378, and His6381 each coordinate Zn(2+). The region spanning 6422-6482 (SLENVVYNLV…NVAVELFAKR (61 aa)) is the Nsp15 N-terminal oligomerization domain. An AV-Nsp11N/CoV-Nsp15M domain is found at 6483 to 6603 (SIRHHPELKL…FAVRKEGQDV (121 aa)). The 140-residue stretch at 6653-6792 (TCRTDMEKDF…NDEKVMTFYP (140 aa)) folds into the NendoU domain. Active-site residues include His6683, His6698, Lys6738, Lys6841, Asp6935, Lys6971, and Glu7004. The Nidovirus-type SAM-dependent 2'-O-MTase domain maps to 6797 to 7059 (ASDWKPGYSM…NSRLSWLVMP (263 aa)).

Belongs to the coronaviruses polyprotein 1ab family. Interacts with host PHB and PHB2. As to quaternary structure, interacts with papain-like protease nsp3 and non-structural protein 6. In terms of assembly, monomer. Homodimer. Only the homodimer shows catalytic activity. Interacts with nsp8 and nsp12 to form the replication-transcription complex (RTC): nsp12, nsp7, two subunits of nsp8, and up to two subunits of nsp13. As to quaternary structure, interacts with nsp7, nsp13 and nsp12 to form the replication-transcription complex (RTC): nsp12, nsp7, two subunits of nsp8, and up to two subunits of nsp13. In terms of assembly, interacts with nsp12. Interacts with proofreading exoribonuclease nsp14 and 2'-O-methyltransferase nsp16; these interactions enhance nsp14 and nsp16 enzymatic activities. As to quaternary structure, interacts with nsp7 and nsp8 to form the replication-transcription complex (RTC): nsp12, nsp7, two subunits of nsp8, and up to two subunits of nsp13. Interacts with nsp9. In terms of assembly, interacts with nsp8 to form the replication-transcription complex (RTC): nsp12, nsp7, two subunits of nsp8, and up to two subunits of nsp13. Mn(2+) is required as a cofactor. The cofactor is Mg(2+). Post-translationally, specific enzymatic cleavages in vivo by its own proteases yield mature proteins. 3CL-PRO and PL-PRO proteinases are autocatalytically processed.

The protein resides in the host membrane. Its subcellular location is the host cytoplasm. The protein localises to the host perinuclear region. It localises to the host endoplasmic reticulum-Golgi intermediate compartment. It carries out the reaction RNA(n) + a ribonucleoside 5'-triphosphate = RNA(n+1) + diphosphate. It catalyses the reaction ATP + H2O = ADP + phosphate + H(+). The enzyme catalyses Thiol-dependent hydrolysis of ester, thioester, amide, peptide and isopeptide bonds formed by the C-terminal Gly of ubiquitin (a 76-residue protein attached to proteins as an intracellular targeting signal).. The catalysed reaction is a 5'-end (N(7)-methyl 5'-triphosphoguanosine)-ribonucleoside in mRNA + S-adenosyl-L-methionine = a 5'-end (N(7)-methyl 5'-triphosphoguanosine)-(2'-O-methyl-ribonucleoside) in mRNA + S-adenosyl-L-homocysteine + H(+). It carries out the reaction uridylyl-uridylyl-ribonucleotide-RNA = a 3'-end uridylyl-2',3'-cyclophospho-uridine-RNA + a 5'-end dephospho-ribonucleoside-RNA. It catalyses the reaction a 5'-end diphospho-ribonucleoside in mRNA + GTP + H(+) = a 5'-end (5'-triphosphoguanosine)-ribonucleoside in mRNA + diphosphate. The enzyme catalyses a 5'-end (5'-triphosphoguanosine)-ribonucleoside in mRNA + S-adenosyl-L-methionine = a 5'-end (N(7)-methyl 5'-triphosphoguanosine)-ribonucleoside in mRNA + S-adenosyl-L-homocysteine. In terms of biological role, the replicase polyprotein of coronaviruses is a multifunctional protein: it contains the activities necessary for the transcription of negative stranded RNA, leader RNA, subgenomic mRNAs and progeny virion RNA as well as proteinases responsible for the cleavage of the polyprotein into functional products. Functionally, inhibits host translation by interacting with the 40S ribosomal subunit. The nsp1-40S ribosome complex further induces an endonucleolytic cleavage near the 5'UTR of host mRNAs, targeting them for degradation. Viral mRNAs are not susceptible to nsp1-mediated endonucleolytic RNA cleavage thanks to the presence of a 5'-end leader sequence and are therefore protected from degradation. By suppressing host gene expression, nsp1 facilitates efficient viral gene expression in infected cells and evasion from host immune response. Its function is as follows. May play a role in the modulation of host cell survival signaling pathway by interacting with host PHB and PHB2. Indeed, these two proteins play a role in maintaining the functional integrity of the mitochondria and protecting cells from various stresses. Responsible for the cleavages located at the N-terminus of the replicase polyprotein. In addition, PL-PRO possesses a deubiquitinating/deISGylating activity and processes both 'Lys-48'- and 'Lys-63'-linked polyubiquitin chains from cellular substrates. Participates together with nsp4 in the assembly of virally-induced cytoplasmic double-membrane vesicles necessary for viral replication. Antagonizes innate immune induction of type I interferon by blocking the phosphorylation, dimerization and subsequent nuclear translocation of host IRF3. Also prevents host NF-kappa-B signaling. In terms of biological role, participates in the assembly of virally-induced cytoplasmic double-membrane vesicles necessary for viral replication. Functionally, cleaves the C-terminus of replicase polyprotein at 11 sites. Recognizes substrates containing the core sequence [ILMVF]-Q-|-[SGACN]. Also able to bind an ADP-ribose-1''-phosphate (ADRP). Its function is as follows. Plays a role in the initial induction of autophagosomes from host endoplasmic reticulum. Later, limits the expansion of these phagosomes that are no longer able to deliver viral components to lysosomes. Forms a hexadecamer with nsp8 (8 subunits of each) that may participate in viral replication by acting as a primase. Alternatively, may synthesize substantially longer products than oligonucleotide primers. In terms of biological role, forms a hexadecamer with nsp7 (8 subunits of each) that may participate in viral replication by acting as a primase. Alternatively, may synthesize substantially longer products than oligonucleotide primers. Functionally, forms a primer, NSP9-pU, which is utilized by the polymerase for the initiation of RNA chains. Interacts with ribosome signal recognition particle RNA (SRP). Together with NSP8, suppress protein integration into the cell membrane, thereby disrupting host immune defenses. Its function is as follows. Plays a pivotal role in viral transcription by stimulating both nsp14 3'-5' exoribonuclease and nsp16 2'-O-methyltransferase activities. Therefore plays an essential role in viral mRNAs cap methylation. RNA-directed RNA polymerase that catalyzes the transcription of viral genomic and subgenomic RNAs. Acts in complex with nsp7 and nsp8 to transcribe both the minus and positive strands of genomic RNA. The kinase-like NiRAN domain of NSP12 attaches one or more nucleotides to the amino terminus of NSP9, forming a covalent RNA-protein intermediate that serves as transcription/replication primer. Subgenomic RNAs (sgRNAs) are formed by discontinuous transcription: The polymerase has the ability to pause at transcription-regulating sequences (TRS) and jump to the leader TRS, resulting in a major deletion. This creates a series of subgenomic RNAs that are replicated, transcribed and translated. In addition, Nsp12 is a subunit of the viral RNA capping enzyme that catalyzes the RNA guanylyltransferase reaction for genomic and sub-genomic RNAs. Subsequently, the NiRAN domain transfers RNA to GDP, and forms the core cap structure GpppA-RNA. In terms of biological role, multi-functional protein with a zinc-binding domain in N-terminus displaying RNA and DNA duplex-unwinding activities with 5' to 3' polarity. Activity of helicase is dependent on magnesium. Functionally, plays a role in viral RNA synthesis through two distinct activities. The N7-guanine methyltransferase activity plays a role in the formation of the cap structure GpppA-RNA. The proofreading exoribonuclease reduces the sensitivity of the virus to RNA mutagens during replication. This activity acts on both ssRNA and dsRNA in a 3'-5' direction. Its function is as follows. Plays a role in viral transcription/replication and prevents the simultaneous activation of host cell dsRNA sensors, such as MDA5/IFIH1, OAS, and PKR. Acts by degrading the 5'-polyuridines generated during replication of the poly(A) region of viral genomic and subgenomic RNAs. Catalyzes a two-step reaction in which a 2'3'-cyclic phosphate (2'3'-cP) is first generated by 2'-O transesterification, which is then hydrolyzed to a 3'-phosphate (3'-P). If not degraded, poly(U) RNA would hybridize with poly(A) RNA tails and activate host dsRNA sensors. Methyltransferase that mediates mRNA cap 2'-O-ribose methylation to the 5'-cap structure of viral mRNAs. N7-methyl guanosine cap is a prerequisite for binding of nsp16. Therefore plays an essential role in viral mRNAs cap methylation which is essential to evade immune system. This is Replicase polyprotein 1ab (rep) from Bos taurus (Bovine).